We begin with the raw amino-acid sequence, 616 residues long: Dihydroxy-acid dehydratase (616 aa).

Asp-81 lines the Mg(2+) pocket. A [2Fe-2S] cluster-binding site is contributed by Cys-122. Mg(2+) contacts are provided by Asp-123 and Lys-124. Lys-124 bears the N6-carboxylysine mark. Cys-195 contributes to the [2Fe-2S] cluster binding site. Residue Glu-491 participates in Mg(2+) binding. Ser-517 functions as the Proton acceptor in the catalytic mechanism.

This sequence belongs to the IlvD/Edd family. Homodimer. It depends on [2Fe-2S] cluster as a cofactor. Mg(2+) serves as cofactor.

The enzyme catalyses (2R)-2,3-dihydroxy-3-methylbutanoate = 3-methyl-2-oxobutanoate + H2O. The catalysed reaction is (2R,3R)-2,3-dihydroxy-3-methylpentanoate = (S)-3-methyl-2-oxopentanoate + H2O. The protein operates within amino-acid biosynthesis; L-isoleucine biosynthesis; L-isoleucine from 2-oxobutanoate: step 3/4. It functions in the pathway amino-acid biosynthesis; L-valine biosynthesis; L-valine from pyruvate: step 3/4. Its function is as follows. Functions in the biosynthesis of branched-chain amino acids. Catalyzes the dehydration of (2R,3R)-2,3-dihydroxy-3-methylpentanoate (2,3-dihydroxy-3-methylvalerate) into 2-oxo-3-methylpentanoate (2-oxo-3-methylvalerate) and of (2R)-2,3-dihydroxy-3-methylbutanoate (2,3-dihydroxyisovalerate) into 2-oxo-3-methylbutanoate (2-oxoisovalerate), the penultimate precursor to L-isoleucine and L-valine, respectively. The protein is Dihydroxy-acid dehydratase of Salmonella schwarzengrund (strain CVM19633).